The following is a 407-amino-acid chain: Phosphopentomutase (407 aa).

6 residues coordinate Mn(2+): aspartate 11, aspartate 305, histidine 310, aspartate 346, histidine 347, and histidine 358.

The protein belongs to the phosphopentomutase family. The cofactor is Mn(2+).

It is found in the cytoplasm. It carries out the reaction 2-deoxy-alpha-D-ribose 1-phosphate = 2-deoxy-D-ribose 5-phosphate. It catalyses the reaction alpha-D-ribose 1-phosphate = D-ribose 5-phosphate. Its pathway is carbohydrate degradation; 2-deoxy-D-ribose 1-phosphate degradation; D-glyceraldehyde 3-phosphate and acetaldehyde from 2-deoxy-alpha-D-ribose 1-phosphate: step 1/2. Isomerase that catalyzes the conversion of deoxy-ribose 1-phosphate (dRib-1-P) and ribose 1-phosphate (Rib-1-P) to deoxy-ribose 5-phosphate (dRib-5-P) and ribose 5-phosphate (Rib-5-P), respectively. The chain is Phosphopentomutase from Legionella pneumophila (strain Corby).